The following is a 331-amino-acid chain: Biotin synthase (331 aa).

Positions 39–264 (SELQTCYLVS…VFPQSMVRLA (226 aa)) constitute a Radical SAM core domain. Cys-54, Cys-58, and Cys-61 together coordinate [4Fe-4S] cluster. [2Fe-2S] cluster-binding residues include Cys-98, Cys-130, Cys-190, and Arg-262.

It belongs to the radical SAM superfamily. Biotin synthase family. In terms of assembly, homodimer. It depends on [4Fe-4S] cluster as a cofactor. [2Fe-2S] cluster serves as cofactor.

It catalyses the reaction (4R,5S)-dethiobiotin + (sulfur carrier)-SH + 2 reduced [2Fe-2S]-[ferredoxin] + 2 S-adenosyl-L-methionine = (sulfur carrier)-H + biotin + 2 5'-deoxyadenosine + 2 L-methionine + 2 oxidized [2Fe-2S]-[ferredoxin]. Its pathway is cofactor biosynthesis; biotin biosynthesis; biotin from 7,8-diaminononanoate: step 2/2. Functionally, catalyzes the conversion of dethiobiotin (DTB) to biotin by the insertion of a sulfur atom into dethiobiotin via a radical-based mechanism. The protein is Biotin synthase of Chlamydia abortus (strain DSM 27085 / S26/3) (Chlamydophila abortus).